Consider the following 103-residue polypeptide: Small ribosomal subunit protein uS10 (103 aa).

The protein belongs to the universal ribosomal protein uS10 family. In terms of assembly, part of the 30S ribosomal subunit.

Its function is as follows. Involved in the binding of tRNA to the ribosomes. The polypeptide is Small ribosomal subunit protein uS10 (Neisseria meningitidis serogroup C / serotype 2a (strain ATCC 700532 / DSM 15464 / FAM18)).